A 197-amino-acid polypeptide reads, in one-letter code: MSGRKKLTPPTHFDPEYLFKKYELLRKSVYKKFKDKMINQSDREDLMGTIDQIFLQLVSEYNPNRGVDFPYYIKRMLELRTYHHITKYLKRINGETSLYVKNEDGEVLELQDTIADMHAEEIFSRIVDLHSINPYMELGEKHRNLMIGLFIRKKTLQELAQEEGVPLDRLHARLYFLIRKFEKEHQIDTEIFGEDLY.

In terms of biological role, sigma factors are initiation factors that promote the attachment of RNA polymerase to specific initiation sites and are then released. The sequence is that of RNA polymerase sigma GP34 factor (34) from Bacillus subtilis (Bacteriophage SP01).